A 457-amino-acid polypeptide reads, in one-letter code: UDP-N-acetylmuramate--L-alanine ligase (457 aa).

112 to 118 is an ATP binding site; the sequence is GTHGKTT.

Belongs to the MurCDEF family.

It is found in the cytoplasm. It catalyses the reaction UDP-N-acetyl-alpha-D-muramate + L-alanine + ATP = UDP-N-acetyl-alpha-D-muramoyl-L-alanine + ADP + phosphate + H(+). It functions in the pathway cell wall biogenesis; peptidoglycan biosynthesis. Functionally, cell wall formation. This Solidesulfovibrio magneticus (strain ATCC 700980 / DSM 13731 / RS-1) (Desulfovibrio magneticus) protein is UDP-N-acetylmuramate--L-alanine ligase.